The chain runs to 1048 residues: Self-sufficient cytochrome P450 monooxygenase CYP505E4 (1048 aa).

Position 405 (cysteine 405) interacts with heme. The region spanning 499–640 (VSFFYGSNSG…DLEVWEETNL (142 aa)) is the Flavodoxin-like domain. Residues 505-509 (SNSGT) and 584-616 (VFGC…TRLA) each bind FMN. One can recognise an FAD-binding FR-type domain in the interval 678–906 (RDLIEAKVTA…RPAKDAFHLP (229 aa)).

In the N-terminal section; belongs to the cytochrome P450 family. It depends on FAD as a cofactor. Requires FMN as cofactor. The cofactor is heme.

It carries out the reaction 2 oxidized [cytochrome P450] + NADPH = 2 reduced [cytochrome P450] + NADP(+) + H(+). It catalyses the reaction an organic molecule + reduced [NADPH--hemoprotein reductase] + O2 = an alcohol + oxidized [NADPH--hemoprotein reductase] + H2O + H(+). The enzyme catalyses dodecanoate + reduced [NADPH--hemoprotein reductase] + O2 = 5-hydroxydodecanoate + oxidized [NADPH--hemoprotein reductase] + H2O + H(+). The catalysed reaction is tetradecanoate + reduced [NADPH--hemoprotein reductase] + O2 = 7-hydroxytetradecanoate + oxidized [NADPH--hemoprotein reductase] + H2O + H(+). It carries out the reaction dodecan-1-ol + reduced [NADPH--hemoprotein reductase] + O2 = 1,5-dodecanediol + oxidized [NADPH--hemoprotein reductase] + H2O + H(+). It catalyses the reaction dodecan-1-ol + reduced [NADPH--hemoprotein reductase] + O2 = 1,4-dodecanediol + oxidized [NADPH--hemoprotein reductase] + H2O + H(+). The enzyme catalyses dodecan-1-ol + reduced [NADPH--hemoprotein reductase] + O2 = 1,6-dodecanediol + oxidized [NADPH--hemoprotein reductase] + H2O + H(+). Functionally, self-sufficient cytochrome P450 monooxygenase that catalyzes the regioselective in-chain hydroxylation of alkanes, fatty alcohols, and fatty acids at the omega-7 position. Performs hydroxylation of C10-C16 n-alkanes and C12 and C14 fatty alcohols; and thereby enables the one step biocatalytic synthesis of rare alcohols such as 5-dodecanol and 7-tetradecanol. Converts 1-dodecanol into 1,5-dodecanediol as major product with very little sub-terminally hydroxylated products with the 1,4-dodecanediol and 1,6-dodecanediol more abundant. Converts dodecanoic acid to 5-hydroxydodecanoic acid which can be further converted into delta-dodecalactone by lactonization of the 5-hydroxy acid at low pH. Also gives sub-terminal hydroxylation of dodecanoic acid with 9-hydroxydodecanoic acid being the second most abundant product. This Penicillium expansum (Blue mold rot fungus) protein is Self-sufficient cytochrome P450 monooxygenase CYP505E4.